The sequence spans 101 residues: Small ribosomal subunit protein uS14 (101 aa).

It belongs to the universal ribosomal protein uS14 family. In terms of assembly, part of the 30S ribosomal subunit. Contacts proteins S3 and S10.

In terms of biological role, binds 16S rRNA, required for the assembly of 30S particles and may also be responsible for determining the conformation of the 16S rRNA at the A site. The protein is Small ribosomal subunit protein uS14 of Pseudoalteromonas atlantica (strain T6c / ATCC BAA-1087).